Reading from the N-terminus, the 360-residue chain is Zinc finger protein ztf-2 (360 aa).

Residues 19–41 (LSSPEKEHRRKRRRGEVANPSNT) form a disordered region. 3 consecutive C2H2-type zinc fingers follow at residues 87–109 (RTCS…KRVH), 115–138 (FKCR…AKTH), and 180–203 (YRCQ…SHLH). Low complexity predominate over residues 248-260 (PLSPCRSESSSDS). Residues 248 to 272 (PLSPCRSESSSDSGIQTDPEEEASI) are disordered.

As to expression, expressed in pharyngeal epithelium/arcade, which connects the pharynx to the mouth.

Functionally, transcription factor. Represses gene expression, probably via binding to DNA consensus sequence 5'-[AT][CT]TTCC[AC][AG]-3' in promoter regions. May play a role in pharynx morphogenesis. This is Zinc finger protein ztf-2 from Caenorhabditis elegans.